A 182-amino-acid chain; its full sequence is MADEEDPWGFDDGGEEEKAASTQAGTPAPPSKAPSVASDHKADSVVAGTPANEEAAPEEVEEIKAPPPPPEDDGYRKPVQLYRHWVRPKFLQYKYMYNYRTNYYDDVIDYIDKKQTGVAREIPRPQTWAERVLRTRNISGSDIDSYAPAKRDKQLIQTLAASIRTYNYHTKAYINQRYASVL.

Residues 1–15 show a composition bias toward acidic residues; sequence MADEEDPWGFDDGGE. The tract at residues 1–76 is disordered; sequence MADEEDPWGF…PPPPEDDGYR (76 aa).

Several forms of flightin are thought to be produced through post-translational modifications, possibly by phosphorylation. In terms of tissue distribution, found only in indirect flight muscles (IFM).

Functionally, possibly involved in the regulation of flight muscles contraction, possibly by modulating actin-myosin interaction. The sequence is that of Flightin (fln) from Drosophila melanogaster (Fruit fly).